We begin with the raw amino-acid sequence, 228 residues long: U1 small nuclear ribonucleoprotein C (228 aa).

The Matrin-type zinc-finger motif lies at 4 to 36 (YYCEYCDIYLTHSSPVGRRQHVQGRKHISAKIE). Residues 179-190 (LVKDNPNEERNG) are compositionally biased toward basic and acidic residues. Residues 179–228 (LVKDNPNEERNGDSAIANQPSTMHHEEDQDDPANATGGTANNNDNVSINA) are disordered. The span at 211-221 (ANATGGTANNN) shows a compositional bias: low complexity.

It belongs to the U1 small nuclear ribonucleoprotein C family. As to quaternary structure, U1 snRNP is composed of the 7 core Sm proteins B/B', D1, D2, D3, E, F and G that assemble in a heptameric protein ring on the Sm site of the small nuclear RNA to form the core snRNP, and at least 3 U1 snRNP-specific proteins U1-70K, U1-A and U1-C. U1-C interacts with U1 snRNA and the 5' splice-site region of the pre-mRNA.

The protein resides in the nucleus. Its function is as follows. Component of the spliceosomal U1 snRNP, which is essential for recognition of the pre-mRNA 5' splice-site and the subsequent assembly of the spliceosome. U1-C is directly involved in initial 5' splice-site recognition for both constitutive and regulated alternative splicing. The interaction with the 5' splice-site seems to precede base-pairing between the pre-mRNA and the U1 snRNA. Stimulates commitment or early (E) complex formation by stabilizing the base pairing of the 5' end of the U1 snRNA and the 5' splice-site region. This Plasmodium knowlesi (strain H) protein is U1 small nuclear ribonucleoprotein C.